Consider the following 135-residue polypeptide: Peptide methionine sulfoxide reductase MsrB (135 aa).

The 123-residue stretch at 13–135 folds into the MsrB domain; the sequence is DADWREQLTP…NGHSMVFEPV (123 aa). Zn(2+)-binding residues include cysteine 52, cysteine 55, cysteine 101, and cysteine 104. Residue cysteine 124 is the Nucleophile of the active site.

This sequence belongs to the MsrB Met sulfoxide reductase family. It depends on Zn(2+) as a cofactor.

The catalysed reaction is L-methionyl-[protein] + [thioredoxin]-disulfide + H2O = L-methionyl-(R)-S-oxide-[protein] + [thioredoxin]-dithiol. In Agrobacterium fabrum (strain C58 / ATCC 33970) (Agrobacterium tumefaciens (strain C58)), this protein is Peptide methionine sulfoxide reductase MsrB.